An 887-amino-acid polypeptide reads, in one-letter code: Alanine--tRNA ligase (887 aa).

Residues His-564, His-568, Cys-676, and His-680 each coordinate Zn(2+).

The protein belongs to the class-II aminoacyl-tRNA synthetase family. It depends on Zn(2+) as a cofactor.

It is found in the cytoplasm. It catalyses the reaction tRNA(Ala) + L-alanine + ATP = L-alanyl-tRNA(Ala) + AMP + diphosphate. Functionally, catalyzes the attachment of alanine to tRNA(Ala) in a two-step reaction: alanine is first activated by ATP to form Ala-AMP and then transferred to the acceptor end of tRNA(Ala). Also edits incorrectly charged Ser-tRNA(Ala) and Gly-tRNA(Ala) via its editing domain. In Agrobacterium fabrum (strain C58 / ATCC 33970) (Agrobacterium tumefaciens (strain C58)), this protein is Alanine--tRNA ligase.